The sequence spans 110 residues: UPF0145 protein BLD_1357 (110 aa).

Belongs to the UPF0145 family.

In Bifidobacterium longum (strain DJO10A), this protein is UPF0145 protein BLD_1357.